Here is a 353-residue protein sequence, read N- to C-terminus: Phospho-N-acetylmuramoyl-pentapeptide-transferase (353 aa).

Transmembrane regions (helical) follow at residues 22–42 (FAFF…ITWA), 65–85 (TPTM…LSCI), 88–108 (DNIF…IGLI), 129–149 (LLTQ…SSEL), 161–181 (PLFD…ISSS), 192–212 (GLAT…LYLS), 228–248 (GLGE…GFLW), 256–276 (VFMG…LAII), 281–301 (ILLL…ILQV), and 330–350 (KIIV…LASI).

It belongs to the glycosyltransferase 4 family. MraY subfamily. Requires Mg(2+) as cofactor.

The protein localises to the cell inner membrane. It carries out the reaction UDP-N-acetyl-alpha-D-muramoyl-L-alanyl-gamma-D-glutamyl-meso-2,6-diaminopimeloyl-D-alanyl-D-alanine + di-trans,octa-cis-undecaprenyl phosphate = di-trans,octa-cis-undecaprenyl diphospho-N-acetyl-alpha-D-muramoyl-L-alanyl-D-glutamyl-meso-2,6-diaminopimeloyl-D-alanyl-D-alanine + UMP. It participates in cell wall biogenesis; peptidoglycan biosynthesis. Its function is as follows. Catalyzes the initial step of the lipid cycle reactions in the biosynthesis of the cell wall peptidoglycan: transfers peptidoglycan precursor phospho-MurNAc-pentapeptide from UDP-MurNAc-pentapeptide onto the lipid carrier undecaprenyl phosphate, yielding undecaprenyl-pyrophosphoryl-MurNAc-pentapeptide, known as lipid I. The protein is Phospho-N-acetylmuramoyl-pentapeptide-transferase of Campylobacter jejuni subsp. jejuni serotype O:23/36 (strain 81-176).